Consider the following 366-residue polypeptide: 3-isopropylmalate dehydrogenase (366 aa).

76 to 89 (GPKWDANPSHLRPE) serves as a coordination point for NAD(+). 4 residues coordinate substrate: Arg96, Arg106, Arg134, and Asp219. Mg(2+) is bound by residues Asp219, Asp243, and Asp247. 277–289 (GSAPDIAGKGIAN) is a binding site for NAD(+).

This sequence belongs to the isocitrate and isopropylmalate dehydrogenases family. LeuB type 1 subfamily. Homodimer. The cofactor is Mg(2+). It depends on Mn(2+) as a cofactor.

The protein localises to the cytoplasm. The enzyme catalyses (2R,3S)-3-isopropylmalate + NAD(+) = 4-methyl-2-oxopentanoate + CO2 + NADH. Its pathway is amino-acid biosynthesis; L-leucine biosynthesis; L-leucine from 3-methyl-2-oxobutanoate: step 3/4. Catalyzes the oxidation of 3-carboxy-2-hydroxy-4-methylpentanoate (3-isopropylmalate) to 3-carboxy-4-methyl-2-oxopentanoate. The product decarboxylates to 4-methyl-2 oxopentanoate. The protein is 3-isopropylmalate dehydrogenase of Oceanobacillus iheyensis (strain DSM 14371 / CIP 107618 / JCM 11309 / KCTC 3954 / HTE831).